We begin with the raw amino-acid sequence, 110 residues long: Large ribosomal subunit protein uL22 (110 aa).

The protein belongs to the universal ribosomal protein uL22 family. Part of the 50S ribosomal subunit.

Its function is as follows. This protein binds specifically to 23S rRNA; its binding is stimulated by other ribosomal proteins, e.g. L4, L17, and L20. It is important during the early stages of 50S assembly. It makes multiple contacts with different domains of the 23S rRNA in the assembled 50S subunit and ribosome. In terms of biological role, the globular domain of the protein is located near the polypeptide exit tunnel on the outside of the subunit, while an extended beta-hairpin is found that lines the wall of the exit tunnel in the center of the 70S ribosome. This chain is Large ribosomal subunit protein uL22, found in Pseudomonas aeruginosa (strain LESB58).